Here is a 734-residue protein sequence, read N- to C-terminus: Photosystem I P700 chlorophyll a apoprotein A2 (734 aa).

A run of 8 helical transmembrane segments spans residues 46-69 (IFAS…FHVA), 135-158 (LYTG…LHLQ), 175-199 (LNHH…HVAI), 273-291 (IAHH…GHMY), 330-353 (IHFQ…QHMY), 369-395 (AALY…IFFI), 417-439 (AIIS…LYVH), and 517-535 (FLVH…LILV). [4Fe-4S] cluster-binding residues include C559 and C568. 2 consecutive transmembrane segments (helical) span residues 575 to 596 (AFYL…YWHW) and 643 to 665 (LSVW…MFLI). 3 residues coordinate chlorophyll a: H654, M662, and Y670. W671 serves as a coordination point for phylloquinone. A helical transmembrane segment spans residues 707–727 (LVGLAHFSVGYIFTYAAFLIA).

It belongs to the PsaA/PsaB family. In terms of assembly, the PsaA/B heterodimer binds the P700 chlorophyll special pair and subsequent electron acceptors. PSI consists of a core antenna complex that captures photons, and an electron transfer chain that converts photonic excitation into a charge separation. The eukaryotic PSI reaction center is composed of at least 11 subunits. P700 is a chlorophyll a/chlorophyll a' dimer, A0 is one or more chlorophyll a, A1 is one or both phylloquinones and FX is a shared 4Fe-4S iron-sulfur center. serves as cofactor.

It localises to the plastid. Its subcellular location is the chloroplast thylakoid membrane. The catalysed reaction is reduced [plastocyanin] + hnu + oxidized [2Fe-2S]-[ferredoxin] = oxidized [plastocyanin] + reduced [2Fe-2S]-[ferredoxin]. PsaA and PsaB bind P700, the primary electron donor of photosystem I (PSI), as well as the electron acceptors A0, A1 and FX. PSI is a plastocyanin-ferredoxin oxidoreductase, converting photonic excitation into a charge separation, which transfers an electron from the donor P700 chlorophyll pair to the spectroscopically characterized acceptors A0, A1, FX, FA and FB in turn. Oxidized P700 is reduced on the lumenal side of the thylakoid membrane by plastocyanin. This Nymphaea alba (White water-lily) protein is Photosystem I P700 chlorophyll a apoprotein A2.